We begin with the raw amino-acid sequence, 231 residues long: Protein C activator (231 aa).

In terms of domain architecture, Peptidase S1 spans 1–222 (VIGGDECNIN…YTDWIQSIIS (222 aa)). 6 disulfide bridges follow: cysteine 7–cysteine 138, cysteine 25–cysteine 41, cysteine 73–cysteine 229, cysteine 117–cysteine 183, cysteine 149–cysteine 162, and cysteine 173–cysteine 198. Asparagine 21 carries an N-linked (GlcNAc...) asparagine glycan. Histidine 40 functions as the Charge relay system in the catalytic mechanism. Asparagine 78 carries N-linked (GlcNAc...) asparagine glycosylation. Aspartate 85 (charge relay system) is an active-site residue. Asparagine 129 carries N-linked (GlcNAc...) asparagine glycosylation. Serine 177 serves as the catalytic Charge relay system.

This sequence belongs to the peptidase S1 family. Snake venom subfamily. In terms of assembly, monomer. Expressed by the venom gland.

It localises to the secreted. Snake venom serine protease that selectively cleaves the heavy chain of protein C (PROC). This activation is thrombomodulin-independent. The chain is Protein C activator from Agkistrodon contortrix contortrix (Southern copperhead).